We begin with the raw amino-acid sequence, 388 residues long: Trans-enoyl reductase tenC (388 aa).

51–54 (VDGK) contacts NADP(+). 142–149 (VGVASVGM) serves as a coordination point for substrate. Residues 219-222 (SSES), Y237, and 284-285 (LD) each bind NADP(+). Substrate is bound at residue 304 to 308 (SFTQF). Position 373–374 (373–374 (IK)) interacts with NADP(+).

This sequence belongs to the zinc-containing alcohol dehydrogenase family. In terms of assembly, monomer.

It participates in secondary metabolite biosynthesis. Functionally, trans-enoyl reductase; part of the gene cluster that mediates the biosynthesis of tenellin-type 2-pyridones, iron-chelating compounds involved in iron stress tolerance, competition with the natural competitor fungus Metarhizium robertsii and insect hosts infection. TenC collaborates with the hybrid PKS-NRPS synthetase tenS to catalyze the assembly of the polyketide-amino acid backbone, since tenS lacks a designated enoylreductase (ER) domain. Upon formation of the polyketide backbone on the thiotemplate of tenS, the triketide is transferred to the NRPS module and linked to tyrosine to produce the pyrrolidine-2-dione intermediates, including pretellinin A, 11-hydropretellenin A, 12-hydropretellenin A, 13-hydropretellenin A, 14-hydropretellenin A, 12-oxopretellenin A and prototellinin D. The pathway begins with the assembly of the polyketide-amino acid backbone by the hybrid PKS-NRPS tenS with the help of the enoyl reductase tenC. These enzymes catalyze the synthesis of the pyrrolidine-2-dione intermediates pretellinin A, 11-hydropretellenin A, 12-hydropretellenin A, 13-hydropretellenin A, 14-hydropretellenin A, 12-oxopretellenin A and prototellinin D. The cytochrome P450 monooxygenase tenA then catalyzes an oxidative ring expansion of pretenellin A and 14-hydropretellenin A to form the 2-pyridone core, leading to pretenellin B and pyridovericin, respectively. The cytochrome P450 monooxygenase tenB is then required for the selective N-hydroxylation of the 2-pyridone nitrogen of yield tellinin and 15-hydroxytellenin (15-HT), respectively. The UDP-glucosyltransferase GT1 and the methyltransferase MT1, located outside the tenS gene cluster, contribute to the stepwise glycosylation and methylation of 15-HT to obtain the glycoside pyridovericin-N-O-(4-O-methyl-beta-D-glucopyranoside) (PMGP). Additional related compounds such as 1-O-methyl-15-HT, (8Z)-1-O-methyl-15-HT, and O-methyltenellin A are also produced but the enzymes involved in their biosynthesis have still to be determined. This Beauveria bassiana (White muscardine disease fungus) protein is Trans-enoyl reductase tenC.